The sequence spans 1058 residues: Isoleucine--tRNA ligase (1058 aa).

Residues 48–58 (PYTTGHIHLGT) carry the 'HIGH' region motif. The 'KMSKS' region motif lies at 596–600 (KMSKS). Lys599 serves as a coordination point for ATP.

Belongs to the class-I aminoacyl-tRNA synthetase family. IleS type 2 subfamily. In terms of assembly, monomer. Requires Zn(2+) as cofactor.

Its subcellular location is the cytoplasm. It carries out the reaction tRNA(Ile) + L-isoleucine + ATP = L-isoleucyl-tRNA(Ile) + AMP + diphosphate. In terms of biological role, catalyzes the attachment of isoleucine to tRNA(Ile). As IleRS can inadvertently accommodate and process structurally similar amino acids such as valine, to avoid such errors it has two additional distinct tRNA(Ile)-dependent editing activities. One activity is designated as 'pretransfer' editing and involves the hydrolysis of activated Val-AMP. The other activity is designated 'posttransfer' editing and involves deacylation of mischarged Val-tRNA(Ile). This chain is Isoleucine--tRNA ligase, found in Methanosarcina barkeri (strain Fusaro / DSM 804).